We begin with the raw amino-acid sequence, 459 residues long: Beta-glucosidase (459 aa).

Glutamate 171 serves as the catalytic Proton donor. Glutamate 359 acts as the Nucleophile in catalysis.

This sequence belongs to the glycosyl hydrolase 1 family.

The enzyme catalyses Hydrolysis of terminal, non-reducing beta-D-glucosyl residues with release of beta-D-glucose.. In Agrobacterium sp. (strain ATCC 21400), this protein is Beta-glucosidase (abg).